The sequence spans 388 residues: Succinate--CoA ligase [ADP-forming] subunit beta (388 aa).

The 236-residue stretch at 9-244 folds into the ATP-grasp domain; the sequence is KQLFARYGLP…QSQEDPREAQ (236 aa). Residues Lys46, 53-55, Glu99, Thr102, and Glu107 contribute to the ATP site; that span reads GRG. 2 residues coordinate Mg(2+): Asn199 and Asp213. Substrate-binding positions include Asn264 and 321 to 323; that span reads GIV.

This sequence belongs to the succinate/malate CoA ligase beta subunit family. As to quaternary structure, heterotetramer of two alpha and two beta subunits. Mg(2+) serves as cofactor.

It catalyses the reaction succinate + ATP + CoA = succinyl-CoA + ADP + phosphate. The catalysed reaction is GTP + succinate + CoA = succinyl-CoA + GDP + phosphate. Its pathway is carbohydrate metabolism; tricarboxylic acid cycle; succinate from succinyl-CoA (ligase route): step 1/1. Its function is as follows. Succinyl-CoA synthetase functions in the citric acid cycle (TCA), coupling the hydrolysis of succinyl-CoA to the synthesis of either ATP or GTP and thus represents the only step of substrate-level phosphorylation in the TCA. The beta subunit provides nucleotide specificity of the enzyme and binds the substrate succinate, while the binding sites for coenzyme A and phosphate are found in the alpha subunit. The sequence is that of Succinate--CoA ligase [ADP-forming] subunit beta from Klebsiella pneumoniae (strain 342).